The chain runs to 219 residues: Cyclin-U4-3 (219 aa).

The protein belongs to the cyclin family. Cyclin U/P subfamily. In terms of assembly, interacts with CDKA-1. As to expression, expressed at low levels in roots, stems and flowers. Expressed in the shoot apex, leaf primordia and young leaves.

This Arabidopsis thaliana (Mouse-ear cress) protein is Cyclin-U4-3 (CYCU4-3).